We begin with the raw amino-acid sequence, 357 residues long: Intracellular hyaluronan-binding protein 4 (357 aa).

3 disordered regions span residues 56–116 (VVAR…HKTA), 150–186 (ERPR…KREF), and 313–357 (PGCG…PALT). The segment covering 96–115 (PKQEECGGKDNSRAEKEHKT) has biased composition (basic and acidic residues). Gly residues predominate over residues 155-171 (CGRGRGGMQGRGRGGGI). Residues 176–186 (DGFDQRGKREF) are compositionally biased toward basic and acidic residues. Residues 348–357 (DDPEDFPALT) show a composition bias toward acidic residues.

The protein belongs to the SERBP1-HABP4 family. As to quaternary structure, associates with ribosomes; promoting ribosome stabilization. Interacts with EEF2/eEF2; promoting ribosome stabilization.

The protein localises to the nucleus. It is found in the cytoplasm. The protein resides in the stress granule. Its subcellular location is the sarcoplasm. It localises to the nuclear body. The protein localises to the nucleolus. It is found in the nucleus speckle. The protein resides in the cajal body. Its subcellular location is the gem. Functionally, ribosome-binding protein that promotes ribosome hibernation, a process during which ribosomes are stabilized in an inactive state and preserved from proteasomal degradation. Acts via its association with EEF2/eEF2 factor at the A-site of the ribosome, promoting ribosome stabilization in an inactive state compatible with storage. Plays a key role in ribosome hibernation in the mature egg by promoting ribosome stabilization. Ribosomes, which are produced in large quantities during oogenesis, are stored and translationally repressed in the egg and early embryo. This chain is Intracellular hyaluronan-binding protein 4, found in Gallus gallus (Chicken).